The chain runs to 289 residues: Putative 2-aminoethylphosphonate transport system permease protein PhnU (289 aa).

Transmembrane regions (helical) follow at residues 19–39 (WLLLPLLVLATLFFWPLSLIV), 76–96 (FFATAGCLLLGSVMSLILVFI), 111–131 (FIALPTFLITLAFTFIYGSAG), 150–170 (FLYSMQGVILAEITVFTPLVM), 202–222 (VIFPAALPALMAGGSLCLLLT), and 254–274 (YTVACMIALINIVLSLGLFSL). The ABC transmembrane type-1 domain maps to 68-275 (LLNTLQIAFF…VLSLGLFSLY (208 aa)).

The protein belongs to the binding-protein-dependent transport system permease family.

The protein localises to the cell inner membrane. Its function is as follows. Probably part of the PhnSTUV complex (TC 3.A.1.11.5) involved in 2-aminoethylphosphonate import. Probably responsible for the translocation of the substrate across the membrane. This is Putative 2-aminoethylphosphonate transport system permease protein PhnU (phnU) from Salmonella paratyphi A (strain ATCC 9150 / SARB42).